A 140-amino-acid polypeptide reads, in one-letter code: Truncated tyrosine phosphatase D1 (140 aa).

In terms of domain architecture, Tyrosine-protein phosphatase spans 1-140 (MRRPNCIAEI…SAQWIQFLKK (140 aa)).

Belongs to the protein-tyrosine phosphatase family.

The sequence is that of Truncated tyrosine phosphatase D1 (D1) from Microplitis demolitor bracovirus (isolate Webb) (MdBV).